The primary structure comprises 396 residues: Acetate kinase (396 aa).

Asn-7 is a Mg(2+) binding site. Lys-14 lines the ATP pocket. Residue Arg-91 participates in substrate binding. Catalysis depends on Asp-148, which acts as the Proton donor/acceptor. Residues His-208–Gly-212, Asp-283–Arg-285, and Gly-331–Asn-335 each bind ATP. A Mg(2+)-binding site is contributed by Glu-384.

Belongs to the acetokinase family. As to quaternary structure, homodimer. Mg(2+) is required as a cofactor. The cofactor is Mn(2+).

It localises to the cytoplasm. The catalysed reaction is acetate + ATP = acetyl phosphate + ADP. It functions in the pathway metabolic intermediate biosynthesis; acetyl-CoA biosynthesis; acetyl-CoA from acetate: step 1/2. In terms of biological role, catalyzes the formation of acetyl phosphate from acetate and ATP. Can also catalyze the reverse reaction. The protein is Acetate kinase of Alkaliphilus metalliredigens (strain QYMF).